A 211-amino-acid chain; its full sequence is Ceramide-1-phosphate transfer protein (211 aa).

Positions 53, 57, 103, 107, and 147 each coordinate an N-acylsphingoid base 1-phosphate.

It belongs to the GLTP family.

The protein localises to the cytoplasm. The protein resides in the cytosol. It is found in the golgi apparatus. Its subcellular location is the trans-Golgi network membrane. It localises to the cell membrane. The protein localises to the endosome membrane. The protein resides in the nucleus outer membrane. The catalysed reaction is N-(hexadecanoyl)-sphing-4-enine-1-phosphate(in) = N-(hexadecanoyl)-sphing-4-enine-1-phosphate(out). It catalyses the reaction N-(9Z-octadecenoyl)-sphing-4-enine-1-phosphate(in) = N-(9Z-octadecenoyl)-sphing-4-enine-1-phosphate(out). Its function is as follows. Mediates the intracellular transfer of ceramide-1-phosphate (C1P) between organelle membranes and the cell membrane. Required for normal structure of the Golgi stacks. Can bind phosphoceramides with a variety of aliphatic chains, but has a preference for lipids with saturated C16:0 or monounsaturated C18:1 aliphatic chains, and is inefficient with phosphoceramides containing lignoceryl (C24:0). Plays a role in the regulation of the cellular levels of ceramide-1-phosphate, and thereby contributes to the regulation of phospholipase PLA2G4A activity and the release of arachidonic acid. Has no activity with galactosylceramide, lactosylceramide, sphingomyelin, phosphatidylcholine, phosphatidic acid and ceramide. C1P transfer is stimulated by phosphatidylserine in C1P source vesicles. Regulates autophagy and pyroptosis, but not apoptosis. In Danio rerio (Zebrafish), this protein is Ceramide-1-phosphate transfer protein (cptp).